The sequence spans 457 residues: Exodeoxyribonuclease 7 large subunit (457 aa).

The protein belongs to the XseA family. As to quaternary structure, heterooligomer composed of large and small subunits.

The protein resides in the cytoplasm. It carries out the reaction Exonucleolytic cleavage in either 5'- to 3'- or 3'- to 5'-direction to yield nucleoside 5'-phosphates.. Bidirectionally degrades single-stranded DNA into large acid-insoluble oligonucleotides, which are then degraded further into small acid-soluble oligonucleotides. The protein is Exodeoxyribonuclease 7 large subunit of Escherichia coli O127:H6 (strain E2348/69 / EPEC).